The primary structure comprises 1318 residues: Uromodulin-like 1 (1318 aa).

The N-terminal stretch at 1-21 (MLRTSGLALLALVSAVGPSQA) is a signal peptide. Residues 22–1272 (SGFTEKGLSL…HAEAGLGAGY (1251 aa)) are Extracellular-facing. In terms of domain architecture, EMI spans 33–106 (GYQLCSHRVT…YEQLGLYCVL (74 aa)). Cystine bridges form between C37/C94, C61/C70, and C93/C104. N89 is a glycosylation site (N-linked (GlcNAc...) asparagine). N109 carries N-linked (GlcNAc...) asparagine glycosylation. Residues 114-158 (FTSRPGACPAEGPEPSTSPCSLDIDCPGLEKCCPWSGGRYCMAPA) enclose the WAP domain. An N-linked (GlcNAc...) asparagine glycan is attached at N172. The region spanning 264–313 (DVNECFYEELNACSGRELCANLEGSYWCVCHQEAPATSPRKLNLEWEDCP) is the EGF-like 1; calcium-binding domain. The region spanning 314–398 (PVSDYVVLNV…TTLTIKTNAQ (85 aa)) is the Fibronectin type-III 1 domain. N322, N335, and N417 each carry an N-linked (GlcNAc...) asparagine glycan. Residues 396 to 510 (NAQVFEVTIK…QGTRVQDWDE (115 aa)) enclose the SEA 1 domain. The EGF-like 2; calcium-binding domain maps to 507–552 (DWDECVDSAEHDCSPAAWCINLEGSYTCQCRTTRDATPSRAGRACE). Intrachain disulfides connect C511–C525, C519–C534, and C536–C551. N585 carries N-linked (GlcNAc...) asparagine glycosylation. A disordered region spans residues 593-655 (GYPQGTPAAG…PSPTEDPTGH (63 aa)). Positions 702–791 (VPVSIGRIMV…HLKVRTAARK (90 aa)) constitute a Fibronectin type-III 2 domain. N-linked (GlcNAc...) asparagine glycosylation is present at N713. The region spanning 788–900 (AARKLIGKVR…GDTFIQDYDE (113 aa)) is the SEA 2 domain. The 42-residue stretch at 897–938 (DYDECERKEDDCVPGTSCRNTLGSFTCSCEGGAPDFPVEYSE) folds into the EGF-like 3; calcium-binding domain. 2 disulfide bridges follow: C901–C914 and C908–C923. The interval 938 to 957 (ERPCEGDSPGNETWATSPER) is disordered. N-linked (GlcNAc...) asparagine glycans are attached at residues N984 and N1050. The ZP domain maps to 992–1235 (LCEIEKVVVA…ATCKINCNNF (244 aa)). Cysteines 1157 and 1215 form a disulfide. A helical membrane pass occupies residues 1273 to 1293 (VVLIVVAIFVLVAGTATLLIV). The Cytoplasmic segment spans residues 1294-1318 (RYQRMNGRYNFKIQSNNFSYQVFYE).

Isoform 4 is expressed at low level in kidney, testis and fetal thymus. Isoform 3 is expressed at low level in prostate, testis and fetal thymus.

It is found in the cell membrane. Its subcellular location is the cytoplasm. This is Uromodulin-like 1 (UMODL1) from Homo sapiens (Human).